The chain runs to 184 residues: Large ribosomal subunit protein uL18 (184 aa).

This sequence belongs to the universal ribosomal protein uL18 family. As to quaternary structure, part of the 50S ribosomal subunit. Contacts the 5S and 23S rRNAs.

This is one of the proteins that bind and probably mediate the attachment of the 5S RNA into the large ribosomal subunit, where it forms part of the central protuberance. The protein is Large ribosomal subunit protein uL18 of Natronomonas pharaonis (strain ATCC 35678 / DSM 2160 / CIP 103997 / JCM 8858 / NBRC 14720 / NCIMB 2260 / Gabara) (Halobacterium pharaonis).